A 427-amino-acid polypeptide reads, in one-letter code: 3-phosphoshikimate 1-carboxyvinyltransferase (427 aa).

Residues Lys22, Ser23, and Arg27 each contribute to the 3-phosphoshikimate site. Residue Lys22 coordinates phosphoenolpyruvate. Phosphoenolpyruvate contacts are provided by Gly94 and Arg122. Ser165, Gln167, Asp313, and Lys340 together coordinate 3-phosphoshikimate. Gln167 contributes to the phosphoenolpyruvate binding site. The active-site Proton acceptor is the Asp313. Phosphoenolpyruvate contacts are provided by Arg344 and Arg386.

The protein belongs to the EPSP synthase family. In terms of assembly, monomer.

The protein localises to the cytoplasm. It catalyses the reaction 3-phosphoshikimate + phosphoenolpyruvate = 5-O-(1-carboxyvinyl)-3-phosphoshikimate + phosphate. The protein operates within metabolic intermediate biosynthesis; chorismate biosynthesis; chorismate from D-erythrose 4-phosphate and phosphoenolpyruvate: step 6/7. Its function is as follows. Catalyzes the transfer of the enolpyruvyl moiety of phosphoenolpyruvate (PEP) to the 5-hydroxyl of shikimate-3-phosphate (S3P) to produce enolpyruvyl shikimate-3-phosphate and inorganic phosphate. The polypeptide is 3-phosphoshikimate 1-carboxyvinyltransferase (Koribacter versatilis (strain Ellin345)).